The sequence spans 212 residues: Leucyl/phenylalanyl-tRNA--protein transferase (212 aa).

It belongs to the L/F-transferase family.

The protein resides in the cytoplasm. It carries out the reaction N-terminal L-lysyl-[protein] + L-leucyl-tRNA(Leu) = N-terminal L-leucyl-L-lysyl-[protein] + tRNA(Leu) + H(+). The catalysed reaction is N-terminal L-arginyl-[protein] + L-leucyl-tRNA(Leu) = N-terminal L-leucyl-L-arginyl-[protein] + tRNA(Leu) + H(+). It catalyses the reaction L-phenylalanyl-tRNA(Phe) + an N-terminal L-alpha-aminoacyl-[protein] = an N-terminal L-phenylalanyl-L-alpha-aminoacyl-[protein] + tRNA(Phe). Its function is as follows. Functions in the N-end rule pathway of protein degradation where it conjugates Leu, Phe and, less efficiently, Met from aminoacyl-tRNAs to the N-termini of proteins containing an N-terminal arginine or lysine. The polypeptide is Leucyl/phenylalanyl-tRNA--protein transferase (Allorhizobium ampelinum (strain ATCC BAA-846 / DSM 112012 / S4) (Agrobacterium vitis (strain S4))).